A 310-amino-acid chain; its full sequence is Spermatid maturation protein 1 (310 aa).

The helical transmembrane segment at 29–49 (ILLLLGLIVCINIGINLVTLL) threads the bilayer. The disordered stretch occupies residues 215 to 238 (ALSHKNNAAGSGGCVEGEQAQGQP). Residues 262–286 (VYDARDVRRRLRELTQEVEALSHCY) adopt a coiled-coil conformation.

Testis-specific. Exclusively present in cytoplasm of steps 14-16 elongated spermatids (at protein level).

The protein localises to the membrane. Its subcellular location is the cytoplasm. Its function is as follows. Required for proper cytoplasm removal during spermatogenesis. The sequence is that of Spermatid maturation protein 1 (Spem1) from Mus musculus (Mouse).